The sequence spans 289 residues: ATP synthase mitochondrial F1 complex assembly factor 2 (289 aa).

A mitochondrion-targeting transit peptide spans 1 to 40 (MWRIYPRLRDRWRGLLDRRLSDPTVSVWPGPAPQPPARAY). K133 carries the post-translational modification N6-succinyllysine.

Belongs to the ATP12 family. As to quaternary structure, interacts with ATP5F1B; involved in the assembly of the F1 component of the mitochondrial ATP synthase (ATPase). Interacts with FMC1.

It is found in the mitochondrion inner membrane. In terms of biological role, plays a role in the assembly of the F1 component of the mitochondrial ATP synthase (ATPase). The sequence is that of ATP synthase mitochondrial F1 complex assembly factor 2 from Mus musculus (Mouse).